Consider the following 184-residue polypeptide: ATP synthase subunit b, chloroplastic (184 aa).

The chain crosses the membrane as a helical span at residues 26-48 (ILATNLINLSVVLGVLIFFGKGV).

It belongs to the ATPase B chain family. As to quaternary structure, F-type ATPases have 2 components, F(1) - the catalytic core - and F(0) - the membrane proton channel. F(1) has five subunits: alpha(3), beta(3), gamma(1), delta(1), epsilon(1). F(0) has four main subunits: a(1), b(1), b'(1) and c(10-14). The alpha and beta chains form an alternating ring which encloses part of the gamma chain. F(1) is attached to F(0) by a central stalk formed by the gamma and epsilon chains, while a peripheral stalk is formed by the delta, b and b' chains.

It is found in the plastid. The protein localises to the chloroplast thylakoid membrane. F(1)F(0) ATP synthase produces ATP from ADP in the presence of a proton or sodium gradient. F-type ATPases consist of two structural domains, F(1) containing the extramembraneous catalytic core and F(0) containing the membrane proton channel, linked together by a central stalk and a peripheral stalk. During catalysis, ATP synthesis in the catalytic domain of F(1) is coupled via a rotary mechanism of the central stalk subunits to proton translocation. In terms of biological role, component of the F(0) channel, it forms part of the peripheral stalk, linking F(1) to F(0). In Calycanthus floridus var. glaucus (Eastern sweetshrub), this protein is ATP synthase subunit b, chloroplastic.